Here is a 1711-residue protein sequence, read N- to C-terminus: Reverse gyrase (1711 aa).

An RG N-terminal-type zinc finger spans residues 1–39 (MKAVYREMCPNCWGRISDERLVMRNPCEECLDEPVHADS). Zn(2+)-binding residues include cysteine 9, cysteine 12, cysteine 27, and cysteine 30. Residues glutamine 89 and 106–113 (APTGMGKS) contribute to the ATP site. Residues 93 to 256 (VKRLLKGRSF…RLKKQMSRYL (164 aa)) enclose the Helicase ATP-binding domain. Residues 213-216 (DDVD) carry the DEAD box motif. Positions 638 to 1711 (DLVRSALMIV…YSEIQRYVSG (1074 aa)) are topoisomerase I. Positions 642–805 (SALMIVESPN…NIKRIEFHEV (164 aa)) constitute a Toprim domain. Mg(2+) is bound at residue glutamate 648. The segment at 722 to 751 (LKRCRDCGHQFVDWEKKGVCPRCGSTNVRD) adopts an RG C-terminal-type zinc-finger fold. Residues cysteine 725, cysteine 728, cysteine 741, and cysteine 744 each contribute to the Zn(2+) site. Mg(2+) is bound at residue aspartate 774. A Topo IA-type catalytic domain is found at 821–1709 (NENRVNAQIV…ELYSEIQRYV (889 aa)). The region spanning 1160 to 1287 (VFGLVLGDGT…LSVYLYQIGI (128 aa)) is the DOD-type homing endonuclease domain. The active-site O-(5'-phospho-DNA)-tyrosine intermediate is tyrosine 1452.

In the N-terminal section; belongs to the DEAD box helicase family. DDVD subfamily. This sequence in the C-terminal section; belongs to the type IA topoisomerase family. Monomer. Zn(2+) serves as cofactor. Requires Mg(2+) as cofactor. Post-translationally, this protein undergoes a protein self splicing that involves a post-translational excision of the intervening region (intein) followed by peptide ligation.

The protein localises to the cytoplasm. It carries out the reaction ATP + H2O = ADP + phosphate + H(+). Functionally, modifies the topological state of DNA by introducing positive supercoils in an ATP-dependent process, increasing the linking number in steps of +1. Binds to single-stranded DNA, transiently cleaves and then rejoins the ends, introducing a positive supercoil in the process. The scissile phosphodiester is attacked by the catalytic tyrosine of the enzyme, resulting in the formation of a DNA-(5'-phosphotyrosyl)-enzyme intermediate. Probably involved in rewinding DNA strands in regions of the chromosome that have opened up to allow replication, transcription, DNA repair and/or for DNA protection. The sequence is that of Reverse gyrase from Thermococcus kodakarensis (strain ATCC BAA-918 / JCM 12380 / KOD1) (Pyrococcus kodakaraensis (strain KOD1)).